A 117-amino-acid polypeptide reads, in one-letter code: MTEPQFRSKGPELLVELSQHVADTVKTVTELDPQTAELVGNARFAKHMMTVWGGQNVYFPMGISWRASQRDLQIYEEFDGRNHSALAKKYNVSLQWIYKIVRTMRKEELLAKQHTQA.

The segment at residues 82–102 (NHSALAKKYNVSLQWIYKIVR) is a DNA-binding region (H-T-H motif).

Belongs to the c/mor transcriptional regulatory family.

Regulates pectin lyase production in response to DNA damage. This Pectobacterium carotovorum subsp. carotovorum (Erwinia carotovora subsp. carotovora) protein is DNA-binding protein RdgB (rdgB).